Here is a 300-residue protein sequence, read N- to C-terminus: U6 snRNA methylphosphate capping enzyme Amus (300 aa).

Residues 1-12 (MDLENNNNTPLT) are compositionally biased toward polar residues. 2 disordered regions span residues 1-21 (MDLENNNNTPLTGKQAEKCAK) and 34-68 (VESKRLKKEESNVEATSRPPAQSPKKRLHLNGKPM). Basic and acidic residues predominate over residues 34-44 (VESKRLKKEES). Residues 95-300 (DIRLDVLGTQ…KRPIQIFTKS (206 aa)) enclose the Bin3-type SAM domain. N119 and D140 together coordinate S-adenosyl-L-methionine.

The protein belongs to the methyltransferase superfamily.

The protein localises to the nucleus. Functionally, probable S-adenosyl-L-methionine-dependent methyltransferase that binds and stabilizes U6 snRNA, probably by adding a methylphosphate cap at its 5'-end. Required for U6 stability, but not stability of 7SK snRNAs, other miRNAs or tRNAs. U6 stabilization is required for efficient pre-mRNA splicing. Essential for organismal and germline development. In Drosophila melanogaster (Fruit fly), this protein is U6 snRNA methylphosphate capping enzyme Amus.